The primary structure comprises 225 residues: Uracil-DNA glycosylase (225 aa).

The active-site Proton acceptor is Asp-65.

It belongs to the uracil-DNA glycosylase (UDG) superfamily. UNG family.

The protein resides in the cytoplasm. The catalysed reaction is Hydrolyzes single-stranded DNA or mismatched double-stranded DNA and polynucleotides, releasing free uracil.. In terms of biological role, excises uracil residues from the DNA which can arise as a result of misincorporation of dUMP residues by DNA polymerase or due to deamination of cytosine. This Bacillus cereus (strain ATCC 10987 / NRS 248) protein is Uracil-DNA glycosylase.